Consider the following 409-residue polypeptide: Cobalt-precorrin-5B C(1)-methyltransferase (409 aa).

It belongs to the CbiD family.

It carries out the reaction Co-precorrin-5B + S-adenosyl-L-methionine = Co-precorrin-6A + S-adenosyl-L-homocysteine. The protein operates within cofactor biosynthesis; adenosylcobalamin biosynthesis; cob(II)yrinate a,c-diamide from sirohydrochlorin (anaerobic route): step 6/10. In terms of biological role, catalyzes the methylation of C-1 in cobalt-precorrin-5B to form cobalt-precorrin-6A. The protein is Cobalt-precorrin-5B C(1)-methyltransferase of Methanopyrus kandleri (strain AV19 / DSM 6324 / JCM 9639 / NBRC 100938).